Here is a 169-residue protein sequence, read N- to C-terminus: S-ribosylhomocysteine lyase (169 aa).

The Fe cation site is built by H54, H58, and C128.

It belongs to the LuxS family. In terms of assembly, homodimer. Fe cation is required as a cofactor.

It catalyses the reaction S-(5-deoxy-D-ribos-5-yl)-L-homocysteine = (S)-4,5-dihydroxypentane-2,3-dione + L-homocysteine. In terms of biological role, involved in the synthesis of autoinducer 2 (AI-2) which is secreted by bacteria and is used to communicate both the cell density and the metabolic potential of the environment. The regulation of gene expression in response to changes in cell density is called quorum sensing. Catalyzes the transformation of S-ribosylhomocysteine (RHC) to homocysteine (HC) and 4,5-dihydroxy-2,3-pentadione (DPD). The protein is S-ribosylhomocysteine lyase of Shewanella sp. (strain ANA-3).